A 226-amino-acid chain; its full sequence is Ribonuclease 3 (226 aa).

In terms of domain architecture, RNase III spans 7 to 129 (LPRLCRTLGY…IIGAIYLDSD (123 aa)). E42 serves as a coordination point for Mg(2+). D46 is an active-site residue. Mg(2+)-binding residues include D115 and E118. Residue E118 is part of the active site. Residues 156-226 (DAKTLLQEYL…AAQVLELLKK (71 aa)) enclose the DRBM domain.

Belongs to the ribonuclease III family. Homodimer. It depends on Mg(2+) as a cofactor.

Its subcellular location is the cytoplasm. The enzyme catalyses Endonucleolytic cleavage to 5'-phosphomonoester.. Functionally, digests double-stranded RNA. Involved in the processing of primary rRNA transcript to yield the immediate precursors to the large and small rRNAs (23S and 16S). Processes some mRNAs, and tRNAs when they are encoded in the rRNA operon. Processes pre-crRNA and tracrRNA of type II CRISPR loci if present in the organism. This chain is Ribonuclease 3, found in Shewanella sp. (strain W3-18-1).